A 345-amino-acid polypeptide reads, in one-letter code: Baculoviral IAP repeat-containing protein 7-B (345 aa).

BIR repeat units lie at residues 46–112 (RQRS…PFLQ) and 154–219 (RLGS…DFLL). Residues Cys188, Cys191, His208, and Cys215 each contribute to the Zn(2+) site. At Ser237 the chain carries Phosphoserine. At Ser241 the chain carries Phosphoserine; by MAPK1. Residue Ser253 is modified to Phosphoserine. Ser257 is modified (phosphoserine; by MAPK1). The tract at residues 258–286 (TESVSVPRAPTPGERSEPPKVSGPPLSTE) is disordered. The RING-type zinc finger occupies 298–333 (CKVCMDKDVSMLFVPCGHLVVCTECAPNLRHCPICR).

Belongs to the IAP family. Post-translationally, auto-ubiquitinated, and degraded in a 2-step mechanism; a caspase-independent first step and a caspase-dependent second step. In terms of processing, phosphorylated via MAPK-dependent and CDK-dependent pathways during oocyte maturation. Phosphorylation does not appear to affect caspase inhibition or autoubiquitination activity.

It localises to the cytoplasm. It catalyses the reaction S-ubiquitinyl-[E2 ubiquitin-conjugating enzyme]-L-cysteine + [acceptor protein]-L-lysine = [E2 ubiquitin-conjugating enzyme]-L-cysteine + N(6)-ubiquitinyl-[acceptor protein]-L-lysine.. Its function is as follows. Weak apoptotic suppressor. Has E3 ubiquitin-protein ligase activity. Weak inhibitor of caspase activity. In Xenopus laevis (African clawed frog), this protein is Baculoviral IAP repeat-containing protein 7-B (birc7-b).